The primary structure comprises 259 residues: Bisphosphoglycerate mutase (259 aa).

Ser2 carries the post-translational modification N-acetylserine. Substrate contacts are provided by residues Arg10 to Asn17, Cys23 to Ser24, Arg62, Glu89 to Tyr92, Arg100, and Arg116 to Arg117. His11 acts as the Tele-phosphohistidine intermediate in catalysis. Glu89 serves as the catalytic Proton donor/acceptor. A Phosphothreonine modification is found at Thr122. Gly189 to Asn190 lines the substrate pocket.

This sequence belongs to the phosphoglycerate mutase family. BPG-dependent PGAM subfamily. In terms of assembly, homodimer. Expressed in red blood cells. Expressed in placenta (labyrinthine trophoblasts).

It carries out the reaction (2R)-3-phospho-glyceroyl phosphate = (2R)-2,3-bisphosphoglycerate + H(+). The enzyme catalyses (2R)-2-phosphoglycerate = (2R)-3-phosphoglycerate. Its activity is regulated as follows. At alkaline pH BPGM favors the synthase reaction; however, at lower pH the phosphatase reaction is dominant. Inhibited by citrate. Its function is as follows. Plays a major role in regulating hemoglobin oxygen affinity by controlling the levels of its allosteric effector 2,3-bisphosphoglycerate (2,3-BPG). Also exhibits mutase (EC 5.4.2.11) activity. In Mus musculus (Mouse), this protein is Bisphosphoglycerate mutase (Bpgm).